Here is a 351-residue protein sequence, read N- to C-terminus: Nicotinate-nucleotide--dimethylbenzimidazole phosphoribosyltransferase (351 aa).

Glutamate 317 functions as the Proton acceptor in the catalytic mechanism.

This sequence belongs to the CobT family.

It carries out the reaction 5,6-dimethylbenzimidazole + nicotinate beta-D-ribonucleotide = alpha-ribazole 5'-phosphate + nicotinate + H(+). The protein operates within nucleoside biosynthesis; alpha-ribazole biosynthesis; alpha-ribazole from 5,6-dimethylbenzimidazole: step 1/2. Catalyzes the synthesis of alpha-ribazole-5'-phosphate from nicotinate mononucleotide (NAMN) and 5,6-dimethylbenzimidazole (DMB). This Pseudomonas putida (strain ATCC 700007 / DSM 6899 / JCM 31910 / BCRC 17059 / LMG 24140 / F1) protein is Nicotinate-nucleotide--dimethylbenzimidazole phosphoribosyltransferase.